The following is a 211-amino-acid chain: Thymidylate kinase (211 aa).

ATP is bound at residue 7 to 14 (GIDASGKS).

It belongs to the thymidylate kinase family.

It catalyses the reaction dTMP + ATP = dTDP + ADP. Phosphorylation of dTMP to form dTDP in both de novo and salvage pathways of dTTP synthesis. This Mesomycoplasma hyopneumoniae (strain 232) (Mycoplasma hyopneumoniae) protein is Thymidylate kinase.